The following is a 72-amino-acid chain: AGEECDCGSPANPCCDAATCKLRPGAQCAEGLCCDQCRFIKKGKICRRARGDNPDDRCTGQSADCPRNHFHA.

The Disintegrin domain maps to 1 to 72 (AGEECDCGSP…ADCPRNHFHA (72 aa)). 6 disulfide bridges follow: C5-C20, C7-C15, C14-C37, C28-C34, C33-C58, and C46-C65. Residues 50–52 (RGD) carry the Cell attachment site motif.

This sequence belongs to the venom metalloproteinase (M12B) family. P-II subfamily. P-IIa sub-subfamily. In terms of assembly, monomer (disintegrin). Expressed by the venom gland.

It localises to the secreted. Inhibits fibrinogen interaction with platelets. Acts by binding to alpha-IIb/beta-3 (ITGA2B/ITGB3) on the platelet surface and inhibits aggregation induced by ADP, thrombin, platelet-activating factor and collagen. The chain is Disintegrin basilicin from Crotalus basiliscus (Mexican west-coast rattlesnake).